Consider the following 224-residue polypeptide: Glutathione S-transferase Mu 5 (224 aa).

One can recognise a GST N-terminal domain in the interval 4–91 (KSMVLGYWDI…YIARKHNMCG (88 aa)). A Phosphoserine modification is found at Ser5. Glutathione is bound by residues 10 to 11 (YW), 49 to 53 (WLDVK), 62 to 63 (NL), and 75 to 76 (QS). The GST C-terminal domain occupies 93–211 (TEEEKIRVDI…QSDRFFKMPI (119 aa)). Substrate is bound at residue Tyr119.

It belongs to the GST superfamily. Mu family. As to quaternary structure, homodimer. Interacts with PFKM isoform 2 and isoform 3 (via N-terminal testis-specific region).

The protein resides in the cytoplasm. The catalysed reaction is RX + glutathione = an S-substituted glutathione + a halide anion + H(+). Its function is as follows. Conjugation of reduced glutathione to a wide number of exogenous and endogenous hydrophobic electrophiles. In Mus musculus (Mouse), this protein is Glutathione S-transferase Mu 5 (Gstm5).